Reading from the N-terminus, the 214-residue chain is MTTLADLRINYSRASLDEADVAHDPFAQFDRWFKEALAAKLPEPNTMTLATVGDDGRPSARIVLIKGVDERGFVFFTNYESRKGRDLAAHPQAALLFYWIELERQVRIEGRIEKTSAEESDRYFASRPLGSRIGAWASEQSAVIDSRATLEAQEQAVSERYGDNPPRPPHWGGYRLVPDSIEFWQGRPSRLHDRLLYTRDADTSPSWSISRLSP.

Substrate is bound by residues 8–11 (RINY) and Lys-66. Residues 61–66 (RIVLIK), 76–77 (FT), Arg-82, Lys-83, and Gln-105 each bind FMN. Tyr-123, Arg-127, and Ser-131 together coordinate substrate. Residues 140–141 (QS) and Trp-184 contribute to the FMN site. Position 190-192 (190-192 (RLH)) interacts with substrate. Arg-194 contacts FMN.

This sequence belongs to the pyridoxamine 5'-phosphate oxidase family. As to quaternary structure, homodimer. It depends on FMN as a cofactor.

It carries out the reaction pyridoxamine 5'-phosphate + O2 + H2O = pyridoxal 5'-phosphate + H2O2 + NH4(+). The enzyme catalyses pyridoxine 5'-phosphate + O2 = pyridoxal 5'-phosphate + H2O2. It participates in cofactor metabolism; pyridoxal 5'-phosphate salvage; pyridoxal 5'-phosphate from pyridoxamine 5'-phosphate: step 1/1. Its pathway is cofactor metabolism; pyridoxal 5'-phosphate salvage; pyridoxal 5'-phosphate from pyridoxine 5'-phosphate: step 1/1. Catalyzes the oxidation of either pyridoxine 5'-phosphate (PNP) or pyridoxamine 5'-phosphate (PMP) into pyridoxal 5'-phosphate (PLP). This chain is Pyridoxine/pyridoxamine 5'-phosphate oxidase, found in Burkholderia lata (strain ATCC 17760 / DSM 23089 / LMG 22485 / NCIMB 9086 / R18194 / 383).